The chain runs to 764 residues: 5-methyltetrahydropteroyltriglutamate--homocysteine methyltransferase (764 aa).

5-methyltetrahydropteroyltri-L-glutamate is bound by residues 16–19 and K115; that span reads RELK. L-homocysteine is bound by residues 435–437 and E488; that span reads IGS. Residues 435–437 and E488 each bind L-methionine; that span reads IGS. Residues 519–520 and W565 each bind 5-methyltetrahydropteroyltri-L-glutamate; that span reads RC. D603 contributes to the L-homocysteine binding site. D603 lines the L-methionine pocket. E609 contributes to the 5-methyltetrahydropteroyltri-L-glutamate binding site. The Zn(2+) site is built by H645, C647, and E669. The Proton donor role is filled by H698. C730 is a Zn(2+) binding site.

This sequence belongs to the vitamin-B12 independent methionine synthase family. Requires Zn(2+) as cofactor.

The catalysed reaction is 5-methyltetrahydropteroyltri-L-glutamate + L-homocysteine = tetrahydropteroyltri-L-glutamate + L-methionine. It participates in amino-acid biosynthesis; L-methionine biosynthesis via de novo pathway; L-methionine from L-homocysteine (MetE route): step 1/1. Catalyzes the transfer of a methyl group from 5-methyltetrahydrofolate to homocysteine resulting in methionine formation. This chain is 5-methyltetrahydropteroyltriglutamate--homocysteine methyltransferase, found in Burkholderia mallei (strain NCTC 10247).